A 394-amino-acid chain; its full sequence is DNA repair protein brc-2 (394 aa).

Positions 1–12 (MGDSSKKVKDSF) are enriched in basic and acidic residues. Disordered stretches follow at residues 1–30 (MGDSSKKVKDSFDTISEPDSFDEPKGVPIS) and 56–136 (MLNS…EKKK). Positions 1–60 (MGDSSKKVKDSFDTISEPDSFDEPKGVPISMEPVFSTAAGIRIDVKQESIDKSKKMLNSD) are interaction with rad-51. Residues 28-62 (PISMEPVFSTAAGIRIDVKQESIDKSKKMLNSDLK) form a BRCA2 repeat-like region region. Positions 56–73 (MLNSDLKSKSSSKGGFSS) are enriched in low complexity. The interval 60–89 (DLKSKSSSKGGFSSPLVRKNNGSSAFVSPF) is interaction with rad-51-DNA complexes. The segment covering 124 to 134 (KKSKKHSKKEK) has biased composition (basic residues). The tract at residues 371-389 (WKDFGSYLKHKEDKKKRRS) is required for ssDNA binding.

Interacts (via N-terminus) with rad-51; regulates rad-51 recruitment to sites of DNA double strand breaks. Expressed in the germline, with highest expression in cells undergoing oogenesis.

Its subcellular location is the nucleus. It localises to the chromosome. Required for the homologous recombination repair of DNA double strand breaks, thereby playing a role in chromosome integrity. Acts by targeting rad-51 to sites of DNA damage and stabilizing rad-51-DNA filaments by blocking ATP hydrolysis catalyzed by rad-51. Promotes rad-51 mediated displacement-loop (D-loop) formation during strand invasion between the invading single-stranded DNA (ssDNA) and the homologous duplex DNA. Also functions independently of rad-51 in DNA double-strand break (DSB) repair by promoting DNA single-strand annealing (SSA) when the homologous recombination (HR) and non-homologous end joining (NHEJ) pathways are compromised. Binds selectively to single-stranded (ssDNA) via its C-terminus. Involved in telomere maintenance and replicative senescence. The polypeptide is DNA repair protein brc-2 (Caenorhabditis elegans).